A 348-amino-acid polypeptide reads, in one-letter code: Large ribosomal subunit protein uL3m (348 aa).

The N-terminal 40 residues, 1–40 (MPGWRLLAQAGARVLGCGARGLGADPGLERRKNILFFVRN), are a transit peptide targeting the mitochondrion.

The protein belongs to the universal ribosomal protein uL3 family. Component of the mitochondrial ribosome large subunit (39S) which comprises a 16S rRNA and about 50 distinct proteins.

It is found in the mitochondrion. The polypeptide is Large ribosomal subunit protein uL3m (Mrpl3) (Mus musculus (Mouse)).